We begin with the raw amino-acid sequence, 237 residues long: Ribosomal RNA small subunit methyltransferase G (237 aa).

Residues Gly-78, Phe-83, 129 to 130 (AE), and Arg-148 each bind S-adenosyl-L-methionine.

It belongs to the methyltransferase superfamily. RNA methyltransferase RsmG family.

Its subcellular location is the cytoplasm. Functionally, specifically methylates the N7 position of a guanine in 16S rRNA. This Streptococcus pyogenes serotype M12 (strain MGAS9429) protein is Ribosomal RNA small subunit methyltransferase G.